The sequence spans 215 residues: Probable phosphoglycerate mutase GpmB (215 aa).

Residues 8–15 (RHGETQWN), 21–22 (QG), R58, 82–85 (ELDM), 104–105 (RR), and 151–152 (GI) contribute to the substrate site. The active-site Tele-phosphohistidine intermediate is H9. Catalysis depends on E82, which acts as the Proton donor/acceptor.

Belongs to the phosphoglycerate mutase family. GpmB subfamily.

The catalysed reaction is (2R)-2-phosphoglycerate = (2R)-3-phosphoglycerate. It participates in carbohydrate degradation; glycolysis; pyruvate from D-glyceraldehyde 3-phosphate: step 3/5. This is Probable phosphoglycerate mutase GpmB from Enterobacter sp. (strain 638).